Here is a 390-residue protein sequence, read N- to C-terminus: MSRSQEELEATLQIAKVNPEDLRSTVHCLSFSSEFTSGDYSLMELDDTLCKQIEAGDSLVIRGDKSDHAVLCSQDKTYDLKIADTSNLLLFIPGCKLPDQLPADQQPLSVIHCEIAGFSNHYWELRRCRPKLKKLKKLLMENTYNGPENESESSQETSLYTTEDLLSVIQSSTEELMDHLKAIHACNIKGIWRLLDFDYEMKLLNHITQLIDSESWSFSKVPLQVCLQELRSLEPEEMIEHCLTCYGKRLMEEGGDCFALDEDKICRATALMLLQNAVKFNLAEFQEVWQQSVPDGMNTRLDQLKGLALVDRTSRPETIFLLQTEDLPEDTQERFNTLFGMREKWTEADIAPYIQDLCGEKQTIGALLTKYARSSMQNGIKLFNSRRPLS.

This sequence belongs to the DCC1 family. Component of the ctf18-RFC complex which consists of ctf18, ctf8, dscc1 and the RFC complex.

It localises to the nucleus. Functionally, loads pcna onto primed templates regulating velocity, spacing and restart activity of replication forks. May couple DNA replication to sister chromatid cohesion. This chain is Sister chromatid cohesion protein DCC1 (dscc1), found in Xenopus laevis (African clawed frog).